The sequence spans 153 residues: Peptide deformylase (153 aa).

Residues Cys87 and His129 each coordinate Fe cation. Glu130 is an active-site residue. His133 is a binding site for Fe cation.

This sequence belongs to the polypeptide deformylase family. It depends on Fe(2+) as a cofactor.

The enzyme catalyses N-terminal N-formyl-L-methionyl-[peptide] + H2O = N-terminal L-methionyl-[peptide] + formate. Its function is as follows. Removes the formyl group from the N-terminal Met of newly synthesized proteins. Requires at least a dipeptide for an efficient rate of reaction. N-terminal L-methionine is a prerequisite for activity but the enzyme has broad specificity at other positions. This chain is Peptide deformylase, found in Dictyoglomus thermophilum (strain ATCC 35947 / DSM 3960 / H-6-12).